The sequence spans 310 residues: Alpha/beta hydrolase domain-containing protein 17A (310 aa).

Residues serine 190, aspartate 255, and histidine 284 each act as charge relay system in the active site. Serine 307 bears the Phosphoserine mark.

This sequence belongs to the AB hydrolase superfamily. ABHD17 family. Palmitoylated on cysteine residues located in a cysteine cluster at the N-terminus which promotes membrane localization. Palmitoylation is required for post-synaptic localization and for depalmitoylating activity towards DLG4/PSD95.

It is found in the cell membrane. The protein localises to the endosome membrane. The protein resides in the cell projection. It localises to the dendritic spine. Its subcellular location is the postsynaptic density membrane. The enzyme catalyses S-hexadecanoyl-L-cysteinyl-[protein] + H2O = L-cysteinyl-[protein] + hexadecanoate + H(+). Hydrolyzes fatty acids from S-acylated cysteine residues in proteins. Has depalmitoylating activity towards NRAS. Has depalmitoylating activity towards DLG4/PSD95. May have depalmitoylating activity towards MAP6. The polypeptide is Alpha/beta hydrolase domain-containing protein 17A (Bos taurus (Bovine)).